The primary structure comprises 304 residues: Foldase protein PrsA (304 aa).

A signal peptide spans methionine 1–alanine 19. The N-palmitoyl cysteine moiety is linked to residue cysteine 20. Cysteine 20 carries S-diacylglycerol cysteine lipidation. Positions lysine 140–aspartate 231 constitute a PpiC domain. The segment at phenylalanine 285–glutamine 304 is disordered. Residues glutamine 292 to glutamine 304 show a composition bias toward low complexity.

This sequence belongs to the PrsA family.

It is found in the cell membrane. It carries out the reaction [protein]-peptidylproline (omega=180) = [protein]-peptidylproline (omega=0). Plays a major role in protein secretion by helping the post-translocational extracellular folding of several secreted proteins. In Exiguobacterium sibiricum (strain DSM 17290 / CCUG 55495 / CIP 109462 / JCM 13490 / 255-15), this protein is Foldase protein PrsA.